The sequence spans 236 residues: Probable methylthioribulose-1-phosphate dehydratase (236 aa).

Positions 1–29 (MQNVQQPKKRKLSDEIIAEDEDYQRDPEH) are disordered. Cys-103 is a binding site for substrate. Residues His-121, His-123, and His-201 each coordinate Zn(2+).

The protein belongs to the aldolase class II family. MtnB subfamily. Requires Zn(2+) as cofactor.

The protein resides in the cytoplasm. It catalyses the reaction 5-(methylsulfanyl)-D-ribulose 1-phosphate = 5-methylsulfanyl-2,3-dioxopentyl phosphate + H2O. It functions in the pathway amino-acid biosynthesis; L-methionine biosynthesis via salvage pathway; L-methionine from S-methyl-5-thio-alpha-D-ribose 1-phosphate: step 2/6. In terms of biological role, catalyzes the dehydration of methylthioribulose-1-phosphate (MTRu-1-P) into 2,3-diketo-5-methylthiopentyl-1-phosphate (DK-MTP-1-P). The protein is Probable methylthioribulose-1-phosphate dehydratase of Trichoplax adhaerens (Trichoplax reptans).